Here is a 944-residue protein sequence, read N- to C-terminus: UvrABC system protein A (944 aa).

Residue 33–40 participates in ATP binding; sequence GLSGSGKS. The C4-type zinc-finger motif lies at 252-279; the sequence is CPICGFSIGELEPRMFSFNSPFGACPTC. ABC transporter domains follow at residues 309-587 and 607-935; these read WEPT…KKSL and ITDR…QYLK. 639–646 contacts ATP; that stretch reads GVSGSGKS. The C4-type zinc-finger motif lies at 738–764; that stretch reads CEACKGDGIIKIEMHFLPDVYVPCEVC.

The protein belongs to the ABC transporter superfamily. UvrA family. Forms a heterotetramer with UvrB during the search for lesions.

The protein resides in the cytoplasm. The UvrABC repair system catalyzes the recognition and processing of DNA lesions. UvrA is an ATPase and a DNA-binding protein. A damage recognition complex composed of 2 UvrA and 2 UvrB subunits scans DNA for abnormalities. When the presence of a lesion has been verified by UvrB, the UvrA molecules dissociate. This is UvrABC system protein A from Staphylococcus epidermidis (strain ATCC 35984 / DSM 28319 / BCRC 17069 / CCUG 31568 / BM 3577 / RP62A).